The following is a 632-amino-acid chain: RNA-binding post-transcriptional regulator csx1 (632 aa).

2 positions are modified to phosphoserine; by MAPK sty1: serine 42 and serine 54. Phosphoserine occurs at positions 67 and 69. 2 RRM domains span residues aspartate 85–glycine 167 and phenylalanine 182–proline 261. Serine 291 is subject to Phosphoserine; by MAPK sty1. Residues threonine 297–asparagine 369 enclose the RRM 3 domain. Phosphoserine; by MAPK sty1 is present on serine 455. Residues proline 456–leucine 476 form a disordered region. Over residues serine 466–leucine 476 the composition is skewed to low complexity.

As to quaternary structure, interacts with cip1 and cip2.

It is found in the cytoplasm. Regulates global gene expression after oxidative stress. Interacts and stabilizes atf1 and pcr1 mRNAs after oxidative stress, thus controlling their turnover. This is RNA-binding post-transcriptional regulator csx1 (csx1) from Schizosaccharomyces pombe (strain 972 / ATCC 24843) (Fission yeast).